The primary structure comprises 240 residues: Uridylate kinase (240 aa).

12 to 15 contributes to the ATP binding site; it reads KLSG. Positions 20-25 are involved in allosteric activation by GTP; that stretch reads GDKGFG. G54 contacts UMP. Positions 55 and 59 each coordinate ATP. Residues D74 and 135–142 each bind UMP; that span reads TGSPYFST. The ATP site is built by N163, Y169, and D172.

The protein belongs to the UMP kinase family. As to quaternary structure, homohexamer.

It localises to the cytoplasm. The enzyme catalyses UMP + ATP = UDP + ADP. It functions in the pathway pyrimidine metabolism; CTP biosynthesis via de novo pathway; UDP from UMP (UMPK route): step 1/1. Its activity is regulated as follows. Allosterically activated by GTP. Inhibited by UTP. Catalyzes the reversible phosphorylation of UMP to UDP. This chain is Uridylate kinase, found in Limosilactobacillus reuteri (strain DSM 20016) (Lactobacillus reuteri).